The following is a 1305-amino-acid chain: Cyclin-G-associated kinase (1305 aa).

An N-acetylserine modification is found at Ser2. 2 positions are modified to phosphoserine: Ser2 and Ser16. Residues 40 to 317 (LRVRRVLAEG…EVVRQLQEIA (278 aa)) form the Protein kinase domain. ATP contacts are provided by residues 46 to 54 (LAEGGFAFV) and Lys69. Asp173 acts as the Proton acceptor in catalysis. A Phosphatase tensin-type domain is found at 397–564 (SVANYAKGDL…EYVCDMVAEE (168 aa)). A Phosphoserine modification is found at Ser454. The region spanning 570-708 (SKPMLVKSVV…FQVNLEVEVE (139 aa)) is the C2 tensin-type domain. Disordered regions lie at residues 707-732 (VEPRDRPSREAPPWENTSLRGLNPKI) and 747-854 (FGKP…AAGT). Ser768 is subject to Phosphoserine. Thr774 is subject to Phosphothreonine. The span at 776-789 (SDSPQSSSTDTNHF) shows a compositional bias: polar residues. Residue Ser781 is modified to Phosphoserine. Thr792 bears the Phosphothreonine mark. Residues 805–816 (LDNTSPKESQSV) are compositionally biased toward polar residues. Ser809, Ser824, and Ser827 each carry phosphoserine. Positions 822-832 (DGSEVSDEEEA) are enriched in acidic residues. The span at 836–848 (SEERKPGAGEDTP) shows a compositional bias: basic and acidic residues. Ser938 carries the post-translational modification Phosphoserine. Residues 1037–1139 (DTWADTATPG…WTPQAKPAPR (103 aa)) are disordered. Over residues 1084–1099 (DLSDLSSSLQGLPAGL) the composition is skewed to low complexity. A compositionally biased stretch (polar residues) spans 1111-1132 (TQKSNSPWQANRPTAPGTSWTP). An Omega-N-methylarginine modification is found at Arg1122. The residue at position 1171 (Ser1171) is a Phosphoserine. In terms of domain architecture, J spans 1241-1305 (SRWTPVSMAD…FENQGSRPLF (65 aa)).

Belongs to the protein kinase superfamily. Ser/Thr protein kinase family.

Its subcellular location is the cytoplasm. It is found in the perinuclear region. The protein localises to the golgi apparatus. It localises to the trans-Golgi network. The protein resides in the cell junction. Its subcellular location is the focal adhesion. It is found in the cytoplasmic vesicle. The protein localises to the clathrin-coated vesicle. It catalyses the reaction L-seryl-[protein] + ATP = O-phospho-L-seryl-[protein] + ADP + H(+). The catalysed reaction is L-threonyl-[protein] + ATP = O-phospho-L-threonyl-[protein] + ADP + H(+). Its function is as follows. Associates with cyclin G and CDK5. Seems to act as an auxilin homolog that is involved in the uncoating of clathrin-coated vesicles by Hsc70 in non-neuronal cells. Expression oscillates slightly during the cell cycle, peaking at G1. May play a role in clathrin-mediated endocytosis and intracellular trafficking, and in the dynamics of clathrin assembly/disassembly. This Mus musculus (Mouse) protein is Cyclin-G-associated kinase.